Here is a 212-residue protein sequence, read N- to C-terminus: ER lumen protein-retaining receptor 1 (212 aa).

The Lumenal segment spans residues 1–4 (MNIF). Residues 5–24 (RFLGDISHLSAILILLLKIW) form a helical membrane-spanning segment. Topologically, residues 25–32 (KSRSCAGI) are cytoplasmic. A helical membrane pass occupies residues 33–52 (SGKSQLLFAIVFTTRYLDLF). Residues 47-48 (RY) are interaction with the K-D-E-L motif on target proteins. Over 53–58 (TNFISL) the chain is Lumenal. A helical membrane pass occupies residues 59–79 (YNTSMKMVYVASSYATIWMIY). Residues 80–92 (SKFKATYDGNHDT) lie on the Cytoplasmic side of the membrane. A helical transmembrane segment spans residues 93 to 110 (FRVEFLIVPTAILAFLVN). Residues 111–116 (HDFTPL) lie on the Lumenal side of the membrane. Residues 117-135 (EILWTFSIYLESVAILPQL) traverse the membrane as a helical segment. At 136-149 (FMVSKTGEAETITS) the chain is on the cytoplasmic side. Residues 150 to 168 (HYLFALGIYRALYLFNWIW) traverse the membrane as a helical segment. Residues 159–169 (RALYLFNWIWR) form an interaction with the K-D-E-L motif on target proteins region. The Lumenal portion of the chain corresponds to 169–178 (RYQFEGFFDL). The helical transmembrane segment at 179 to 199 (IAIVAGLVQTVLYCDFFYLYI) threads the bilayer. The Cytoplasmic segment spans residues 200-212 (TKVLKGKKLSLPA). Residues 204–207 (KGKK) are important for recycling of cargo proteins with the sequence motif K-D-E-L from the Golgi to the endoplasmic reticulum.

It belongs to the ERD2 family.

The protein resides in the golgi apparatus membrane. The protein localises to the cytoplasmic vesicle. It localises to the COPI-coated vesicle membrane. Its subcellular location is the endoplasmic reticulum membrane. It is found in the endoplasmic reticulum-Golgi intermediate compartment membrane. Receptor for the C-terminal sequence motif K-D-E-L that is present on endoplasmic reticulum resident proteins and that mediates their recycling from the Golgi back to the endoplasmic reticulum. This chain is ER lumen protein-retaining receptor 1 (kdelr1), found in Xenopus tropicalis (Western clawed frog).